Consider the following 1094-residue polypeptide: AP-3 complex subunit beta-1 (1094 aa).

A compositionally biased stretch (polar residues) spans 1–11 (MSSNSFPYNEQ). Disordered regions lie at residues 1–31 (MSSN…ISPS) and 268–292 (DNGK…KPYT). Phosphoserine is present on residues Ser276 and Ser609. A disordered region spans residues 662–811 (PAGKAKQENS…EKKTKQDRTP (150 aa)). Basic and acidic residues predominate over residues 666-677 (AKQENSAKKFYS). Acidic residues-rich tracts occupy residues 678–696 (ESEE…ESES) and 705–726 (ESGE…EQDS). Basic and acidic residues-rich tracts occupy residues 727-738 (ESGRESGLENKR) and 748-764 (GKSD…KSKT). A phosphoserine mark is found at Ser750 and Ser752. The segment covering 765 to 777 (SDSSNDESSSIED) has biased composition (low complexity). Over residues 778 to 791 (SSSDSESESEPESE) the composition is skewed to acidic residues. Basic and acidic residues predominate over residues 792–811 (SESRRVTKEKEKKTKQDRTP).

It belongs to the adaptor complexes large subunit family. As to quaternary structure, adaptor protein complex 3 (AP-3) is a heterotetramer composed of two large adaptins (delta-type subunit AP3D1 and beta-type subunit AP3B1 or AP3B2), a medium adaptin (mu-type subunit AP3M1 or AP3M2) and a small adaptin (sigma-type subunit APS1 or AP3S2). AP-3 associates with the BLOC-1 complex. Interacts with KIF3A; interaction is direct; interaction is impaired by pyrophosphorylation of AP3B1. Phosphorylated on serine residues. Post-translationally, pyrophosphorylation by 5-diphosphoinositol pentakisphosphate (5-IP7) impairs interaction with KIF3A. Serine pyrophosphorylation is achieved by Mg(2+)-dependent, but enzyme independent transfer of a beta-phosphate from a inositol pyrophosphate to a pre-phosphorylated serine residue. Ubiquitously expressed.

The protein resides in the cytoplasmic vesicle. The protein localises to the clathrin-coated vesicle membrane. Its subcellular location is the golgi apparatus. Its function is as follows. Subunit of non-clathrin- and clathrin-associated adaptor protein complex 3 (AP-3) that plays a role in protein sorting in the late-Golgi/trans-Golgi network (TGN) and/or endosomes. The AP complexes mediate both the recruitment of clathrin to membranes and the recognition of sorting signals within the cytosolic tails of transmembrane cargo molecules. AP-3 appears to be involved in the sorting of a subset of transmembrane proteins targeted to lysosomes and lysosome-related organelles. In concert with the BLOC-1 complex, AP-3 is required to target cargos into vesicles assembled at cell bodies for delivery into neurites and nerve terminals. The sequence is that of AP-3 complex subunit beta-1 (AP3B1) from Homo sapiens (Human).